A 336-amino-acid polypeptide reads, in one-letter code: Probable aquaglyceroporin-2 (336 aa).

The segment at 1-46 (MPISTINDSISESSVHKSSIPTKVEMSQNEKYSEAPSEAPTIPPPP) is disordered. Residues 1-64 (MPISTINDSI…RENCQDAFSE (64 aa)) are Cytoplasmic-facing. The span at 9–19 (SISESSVHKSS) shows a compositional bias: low complexity. Residues 65 to 85 (FFGTFVLLLFGDGVVAQVVLS) traverse the membrane as a helical segment. Over 86–94 (RGTKGDYQS) the chain is Extracellular. Residues 95 to 115 (ISWGWGLGVMLGVYVGGKSGG) traverse the membrane as a helical segment. The Cytoplasmic segment spans residues 116–135 (HLNPAVTLANCLFRGHPWRK). The short motif at 118–120 (NPA) is the NPA 1 element. The helical transmembrane segment at 136–156 (FPIYAVAQVLGAMAAAAVVYG) threads the bilayer. Over 157 to 195 (NYKSAIDAYEGGPGIRTVIGENATAGVFCTYPAEFMTRT) the chain is Extracellular. N-linked (GlcNAc...) asparagine glycosylation occurs at asparagine 178. A helical transmembrane segment spans residues 196–216 (GMFFSEFIASTILQFVIFAMA). Residues 217–223 (DSANIGA) lie on the Cytoplasmic side of the membrane. The chain crosses the membrane as a helical span at residues 224–244 (GPLMPLGLFFLIFGIGACFGW). The Extracellular segment spans residues 245 to 280 (ETGYAINLARDFGPRLVSYMLGYGSEVWSAGGYYFW). Positions 251–253 (NLA) match the NPA 2 motif. Residues 281–301 (IPMVAPFFGCAFGGFLYDVFI) form a helical membrane-spanning segment. Residues 302 to 336 (YTGPSPINTPGMGFGRLVSPRRSTWSNTYNANSPV) lie on the Cytoplasmic side of the membrane.

The protein belongs to the MIP/aquaporin (TC 1.A.8) family.

It localises to the membrane. It catalyses the reaction H2O(in) = H2O(out). The catalysed reaction is glycerol(in) = glycerol(out). Its function is as follows. Probable water/glycerol channel that may have redundant functions with FgAQP4. This is Probable aquaglyceroporin-2 from Gibberella zeae (strain ATCC MYA-4620 / CBS 123657 / FGSC 9075 / NRRL 31084 / PH-1) (Wheat head blight fungus).